The primary structure comprises 1035 residues: Teashirt homolog 2 (1035 aa).

The disordered stretch occupies residues 1–92 (MPRRKQQAPK…ESLLSDASDQ (92 aa)). The stretch at 13–42 (AGYAQEEQLKEEEEIKEEEEEEEDSGSVAQ) forms a coiled coil. Residues 21 to 37 (LKEEEEIKEEEEEEEDS) are compositionally biased toward acidic residues. Polar residues-rich tracts occupy residues 39–49 (SVAQLQGSNDP) and 66–92 (SYQNSPGSHLSNQDAENESLLSDASDQ). Residue Lys189 forms a Glycyl lysine isopeptide (Lys-Gly) (interchain with G-Cter in SUMO2) linkage. 2 consecutive C2H2-type zinc fingers follow at residues 216–240 (FRCRQCSAAYDTLVELTVHMNETGH) and 276–300 (LKCMFCGDSFDSLQDLSVHMIKTKH). Residues 240–266 (HYQDDNRKKDKLRPTSYSKPRKRAFQD) are disordered. Glycyl lysine isopeptide (Lys-Gly) (interchain with G-Cter in SUMO2) cross-links involve residues Lys307 and Lys316. Residues 381–405 (LKCMECGSSHDTLQQLTTHMMVTGH) form a C2H2-type 3; atypical zinc finger. Residue Lys418 forms a Glycyl lysine isopeptide (Lys-Gly) (interchain with G-Cter in SUMO2) linkage. Positions 432-450 (SLSDAPSSDSLAPKPSSNS) are enriched in low complexity. A disordered region spans residues 432–496 (SLSDAPSSDS…DPLQKPLDPA (65 aa)). Over residues 460–483 (ELKRESKKEKPEELRTDEKVLKSE) the composition is skewed to basic and acidic residues. Glycyl lysine isopeptide (Lys-Gly) (interchain with G-Cter in SUMO2) cross-links involve residues Lys462, Lys481, Lys498, and Lys602. 2 disordered regions span residues 600–674 (QVKK…VEPV) and 764–791 (QPIDLTKSKSKKAESSQAQSCTSPPQKH). The segment covering 601–669 (VKKEPEDKEE…KDGGEKEKAQ (69 aa)) has biased composition (basic and acidic residues). Glycyl lysine isopeptide (Lys-Gly) (interchain with G-Cter in SUMO2) cross-links involve residues Lys801 and Lys821. Positions 842–912 (RKGRQSNWNP…NVKYQLRKTG (71 aa)) form a DNA-binding region, homeobox. The segment at 927–949 (FYCSDCASQFRTPSTYISHLESH) adopts a C2H2-type 4 zinc-finger fold. Low complexity predominate over residues 968–977 (VEQEISRVSS). Disordered stretches follow at residues 968 to 987 (VEQEISRVSSAQRSPETIAG) and 1015 to 1035 (SKTHSKSPEHHAQFVTDVDEE). Ser981 carries the post-translational modification Phosphoserine. Residues 995 to 1018 (FKCKLCCRTFVSKHAVKLHLSKTH) form a C2H2-type 5 zinc finger.

It belongs to the teashirt C2H2-type zinc-finger protein family. In terms of assembly, interacts (via homeobox domain) with APBB1 (via PID domain 1). Sumoylated.

The protein localises to the nucleus. Its function is as follows. Probable transcriptional regulator involved in developmental processes. May act as a transcriptional repressor (Potential). The polypeptide is Teashirt homolog 2 (TSHZ2) (Sus scrofa (Pig)).